The following is a 293-amino-acid chain: 4-hydroxybenzoate octaprenyltransferase (293 aa).

The next 8 helical transmembrane spans lie at 19–39, 43–63, 95–115, 135–155, 158–178, 209–229, 231–251, and 266–286; these read PIGI…ASNG, WLIL…GCVV, LLAA…NALV, FFAI…PMSY, LWGE…FWAI, LTAI…VGAL, DFSG…VYHL, and FLHN…HFLL.

It belongs to the UbiA prenyltransferase family. Requires Mg(2+) as cofactor.

Its subcellular location is the cell inner membrane. It catalyses the reaction all-trans-octaprenyl diphosphate + 4-hydroxybenzoate = 4-hydroxy-3-(all-trans-octaprenyl)benzoate + diphosphate. It participates in cofactor biosynthesis; ubiquinone biosynthesis. Catalyzes the prenylation of para-hydroxybenzoate (PHB) with an all-trans polyprenyl group. Mediates the second step in the final reaction sequence of ubiquinone-8 (UQ-8) biosynthesis, which is the condensation of the polyisoprenoid side chain with PHB, generating the first membrane-bound Q intermediate 3-octaprenyl-4-hydroxybenzoate. The polypeptide is 4-hydroxybenzoate octaprenyltransferase (Thiobacillus denitrificans (strain ATCC 25259 / T1)).